The sequence spans 397 residues: Teichoic acid D-alanine hydrolase (397 aa).

Positions 1 to 23 are cleaved as a signal peptide; that stretch reads MKFNKVKLVIHACVLLFIIISIA.

It localises to the cell membrane. It carries out the reaction [(4-D-Ala)-(2-GlcNAc)-Rib-ol-P]n-[Gro-P]m-beta-D-ManNAc-(1-&gt;4)-alpha-D-GlcNAc-P-peptidoglycan + n H2O = [(2-GlcNAc)-Rib-ol-P]n-[Gro-P]m-beta-D-ManNAc-(1-&gt;4)-alpha-D-GlcNAc-P-peptidoglycan + n D-alanine.. Its function is as follows. Catalyzes the liberation of D-alanyl moieties present on wall teichoic acid (WTA) and lipoteichoic acid (LTA). Affects the methicillin resistance level and autolysis in the presence of Triton X-100 as well as the cell wall structure. The chain is Teichoic acid D-alanine hydrolase (fmtA) from Staphylococcus aureus (strain NCTC 8325 / PS 47).